A 169-amino-acid polypeptide reads, in one-letter code: NAD(P)H-quinone oxidoreductase subunit J, chloroplastic (169 aa).

The protein belongs to the complex I 30 kDa subunit family. In terms of assembly, NDH is composed of at least 16 different subunits, 5 of which are encoded in the nucleus.

The protein resides in the plastid. It is found in the chloroplast thylakoid membrane. The catalysed reaction is a plastoquinone + NADH + (n+1) H(+)(in) = a plastoquinol + NAD(+) + n H(+)(out). It carries out the reaction a plastoquinone + NADPH + (n+1) H(+)(in) = a plastoquinol + NADP(+) + n H(+)(out). NDH shuttles electrons from NAD(P)H:plastoquinone, via FMN and iron-sulfur (Fe-S) centers, to quinones in the photosynthetic chain and possibly in a chloroplast respiratory chain. The immediate electron acceptor for the enzyme in this species is believed to be plastoquinone. Couples the redox reaction to proton translocation, and thus conserves the redox energy in a proton gradient. In Marchantia polymorpha (Common liverwort), this protein is NAD(P)H-quinone oxidoreductase subunit J, chloroplastic.